The following is a 105-amino-acid chain: Large ribosomal subunit protein uL24 (105 aa).

Residues 77–93 (DGKPTRVGYRKDDETGK) are compositionally biased toward basic and acidic residues. Residues 77-105 (DGKPTRVGYRKDDETGKNVRIAKSNGKDL) are disordered.

Belongs to the universal ribosomal protein uL24 family. In terms of assembly, part of the 50S ribosomal subunit.

Its function is as follows. One of two assembly initiator proteins, it binds directly to the 5'-end of the 23S rRNA, where it nucleates assembly of the 50S subunit. One of the proteins that surrounds the polypeptide exit tunnel on the outside of the subunit. The sequence is that of Large ribosomal subunit protein uL24 from Mycolicibacterium gilvum (strain PYR-GCK) (Mycobacterium gilvum (strain PYR-GCK)).